We begin with the raw amino-acid sequence, 650 residues long: Chaperone protein DnaK (650 aa).

T200 carries the post-translational modification Phosphothreonine; by autocatalysis. Residues 614 to 634 (AGAAGAAGAAEGAAHAGGAQQ) are disordered.

Belongs to the heat shock protein 70 family.

Its function is as follows. Acts as a chaperone. The sequence is that of Chaperone protein DnaK from Burkholderia cenocepacia (strain ATCC BAA-245 / DSM 16553 / LMG 16656 / NCTC 13227 / J2315 / CF5610) (Burkholderia cepacia (strain J2315)).